The following is a 501-amino-acid chain: Glutamate--tRNA ligase (501 aa).

The 'HIGH' region signature appears at 11-21 (PSPTGFLHIGN). The 'KMSKS' region motif lies at 257 to 261 (KLSKR). Lysine 260 provides a ligand contact to ATP.

This sequence belongs to the class-I aminoacyl-tRNA synthetase family. Glutamate--tRNA ligase type 1 subfamily. In terms of assembly, monomer.

The protein localises to the cytoplasm. The enzyme catalyses tRNA(Glu) + L-glutamate + ATP = L-glutamyl-tRNA(Glu) + AMP + diphosphate. Catalyzes the attachment of glutamate to tRNA(Glu) in a two-step reaction: glutamate is first activated by ATP to form Glu-AMP and then transferred to the acceptor end of tRNA(Glu). The chain is Glutamate--tRNA ligase from Limosilactobacillus reuteri subsp. reuteri (strain JCM 1112) (Lactobacillus reuteri).